Consider the following 2547-residue polypeptide: Lovastatin diketide synthase mokB (2547 aa).

One can recognise a Ketosynthase family 3 (KS3) domain in the interval 10–430; it reads PTPIAVVGMG…GANAHAIVER (421 aa). Catalysis depends on for beta-ketoacyl synthase activity residues Cys-183, His-318, and His-353. Residues 545–890 form an acyl and malonyl transferase region; sequence VFTGQGAQWF…MDLLQGGYPV (346 aa). Residue Ser-635 is the For malonyltransferase activity of the active site. An N-terminal hotdog fold region spans residues 941 to 1079; sequence HDLIGVQEPL…GLIRAQVDHP (139 aa). In terms of domain architecture, PKS/mFAS DH spans 941–1252; the sequence is HDLIGVQEPL…FQSLGAVISD (312 aa). His-973 serves as the catalytic Proton acceptor; for dehydratase activity. Residues 973-985 form a dehydratase-like region; that stretch reads HVVGSRILFPGAG. Residues 1095 to 1252 form a C-terminal hotdog fold region; sequence SRKMAPQDLW…FQSLGAVISD (158 aa). Asp-1160 functions as the Proton donor; for dehydratase activity in the catalytic mechanism. Cysteines 1340 and 1379 form a disulfide. Positions 1510–1547 are methyltransferase; the sequence is YDVVLACQVLHATSNMQRTLNNVRKLLKPGGKLILVET. The Carrier domain maps to 2459 to 2541; it reads ASTEEEATAL…EVAEVVVKKY (83 aa). At Ser-2501 the chain carries O-(pantetheine 4'-phosphoryl)serine.

Requires pantetheine 4'-phosphate as cofactor.

The enzyme catalyses holo-[2-methylbutanoate polyketide synthase] + 2 malonyl-CoA + S-adenosyl-L-methionine + 2 NADPH + 3 H(+) = (S)-2-methylbutanoyl-[2-methylbutanoate polyketide synthase] + S-adenosyl-L-homocysteine + 2 CO2 + 2 NADP(+) + 2 CoA + H2O. It participates in polyketide biosynthesis; lovastatin biosynthesis. Diketide synthase; part of the gene cluster that mediates the biosynthesis of monakolin K, also known as lovastatin, and which acts as a potent competitive inhibitor of HMG-CoA reductase. Monakolin K biosynthesis is performed in two stages. The first stage is catalyzed by the nonaketide synthase mokA, which belongs to type I polyketide synthases and catalyzes the iterative nine-step formation of the polyketide. This PKS stage completed by the action of dehydrogenase mokE, which catalyzes the NADPH-dependent reduction of the unsaturated tetra-, penta- and heptaketide intermediates that arise during the mokA-mediated biosynthesis of the nonaketide chain and leads to dihydromonacolin L. Covalently bound dihydromonacolin L is released from mokA by the mokD esterase. Conversion of dihydromonacolin L into monacolin L and then monacolin J is subsequently performed with the participation of molecular oxygen and P450 monoogygenase mokC. Finally, mokF performs the conversion of monacoline J to monacoline K through the addition of the side-chain diketide moiety (2R)-2-methylbutanoate produced by the diketide synthase mokB. The sequence is that of Lovastatin diketide synthase mokB from Monascus pilosus (Red mold).